Consider the following 887-residue polypeptide: PAN2-PAN3 deadenylation complex subunit PAN3 (887 aa).

The segment at 43–71 (GVKLKYCRYYAKDKTCFYGEECQFLHEDP) adopts a C3H1-type zinc-finger fold. Disordered stretches follow at residues 102–147 (AVAG…IPGM), 284–307 (QTPN…SNVS), and 325–392 (SPAT…SGQV). Residues 122–138 (PGTGAAAGGGGSSGGLD) show a composition bias toward gly residues. The segment at 147–498 (MDGGALTDTS…PPPNRIQKSS (352 aa)) is necessary and sufficient for interaction with PABPC1 but not needed for interaction with PAN2. Positions 284-299 (QTPNPTASEFIPKGGS) match the PABPC-interacting motif-2 (PAM-2) motif. Over residues 298-307 (GSTSRLSNVS) the composition is skewed to polar residues. Phosphoserine is present on residues Ser-354 and Ser-361. The segment covering 363–392 (TPNPASYMVPSSASTSVNNPVSQTPSSGQV) has biased composition (polar residues). A pseudokinase domain region spans residues 463–750 (QIDQADMPAV…SVNDIMPMIG (288 aa)). ATP-binding positions include Arg-521, 570–577 (DFHAGGET), and 644–645 (TK). Residues 751–789 (ARFYTQLDAAQMRNDVIEEDLAKEVQNGRLFRLLAKLGT) are a coiled coil. The segment at 790-887 (INERPEFQKD…ELIAAANGQL (98 aa)) is knob domain.

Belongs to the protein kinase superfamily. PAN3 family. As to quaternary structure, homodimer. Forms a heterotrimer with a catalytic subunit PAN2 to form the poly(A)-nuclease (PAN) deadenylation complex. Interacts (via PAM-2 motif) with poly(A)-binding protein PABPC1 (via PABC domain), conferring substrate specificity of the enzyme complex. Interacts with the GW182 family proteins TNRC6A, TNRC6B and TNRC6. Interacts with YTHDF3. Interacts with PAN2. Interacts (via N-terminus) with PABPC1 at lower efficiency than isoform 3. In terms of assembly, interacts with PAN2. Interacts (via N-terminus) with PABPC1 at higher efficiency than isoform 1.

The protein localises to the cytoplasm. Its subcellular location is the P-body. It localises to the nucleus. Regulatory subunit of the poly(A)-nuclease (PAN) deadenylation complex, one of two cytoplasmic mRNA deadenylases involved in general and miRNA-mediated mRNA turnover. PAN specifically shortens poly(A) tails of RNA and the activity is stimulated by poly(A)-binding protein (PABP). PAN deadenylation is followed by rapid degradation of the shortened mRNA tails by the CCR4-NOT complex. Deadenylated mRNAs are then degraded by two alternative mechanisms, namely exosome-mediated 3'-5' exonucleolytic degradation, or deadenylation-dependent mRNA decapping and subsequent 5'-3' exonucleolytic degradation by XRN1. PAN3 acts as a regulator for PAN activity, recruiting the catalytic subunit PAN2 to mRNA via its interaction with RNA and PABP, and to miRNA targets via its interaction with GW182 family proteins. Functionally, decreases PAN2-mediated deadenylation, possibly by preventing progression into the second CCR4-NOT mediated stage of biphasic deadenylation. Has a significant effect on mRNA stability, generally stabilizing a subset of the transcriptome. Stabilizes mRNAs degraded by the AU-rich element (ARE)-mediated mRNA decay pathway but promotes degradation of mRNAs by the microRNA-mediated pathway. Its activity influences mRNP remodeling, specifically reducing formation of a subset of P-bodies containing GW220, an isoform of TNRC6A. Its function is as follows. Enhances PAN2 deadenylase activity and has an extensive effect on mRNA stability, generally enhancing mRNA decay across the transcriptome by multiple pathways, including the AU-rich element (ARE)-mediated pathway, microRNA-mediated pathway and the nonsense-mediated pathway (NMD). Its activity is required for efficient P-body formation. May be involved in regulating mRNAs of genes involved in cell cycle progression and cell proliferation. The sequence is that of PAN2-PAN3 deadenylation complex subunit PAN3 from Homo sapiens (Human).